Here is a 91-residue protein sequence, read N- to C-terminus: UPF0223 protein SAB0963 (91 aa).

The protein belongs to the UPF0223 family.

This chain is UPF0223 protein SAB0963, found in Staphylococcus aureus (strain bovine RF122 / ET3-1).